The following is a 185-amino-acid chain: MALGKKRIVTQKPNLRQRRDVDNGGLGLGLEFVQYKRGFGRKRILISSGDEMEDSIFTSPVGKKLCDDKTTSVAEGQSRELEDLPLDILVRIICGVEHEDLKQLFHVSKTIREATMIAKQSHFAYSTPRKTSVFHHGRFGWDKPFDVEDDDEEIEAPGAPLQKRYRLSRINRNKDDSGVSVALFH.

In terms of domain architecture, F-box spans 78-126; the sequence is SRELEDLPLDILVRIICGVEHEDLKQLFHVSKTIREATMIAKQSHFAYS.

The sequence is that of F-box protein At1g61340 from Arabidopsis thaliana (Mouse-ear cress).